The following is a 100-amino-acid chain: Large ribosomal subunit protein eL30 (100 aa).

It belongs to the eukaryotic ribosomal protein eL30 family.

The polypeptide is Large ribosomal subunit protein eL30 (Methanococcus maripaludis (strain DSM 14266 / JCM 13030 / NBRC 101832 / S2 / LL)).